A 46-amino-acid chain; its full sequence is Mu-segestritoxin-Sf1b (46 aa).

Cystine bridges form between cysteine 3/cysteine 19, cysteine 10/cysteine 22, cysteine 18/cysteine 42, and cysteine 24/cysteine 40. A keys region for toxin activity region spans residues 31-33 (RPW).

This sequence belongs to the neurotoxin 16 (SFI) family. As to expression, expressed by the venom gland.

Its subcellular location is the secreted. Its function is as follows. Insecticidal toxin. Causes flaccid paralysis followed by death when injected into Heliothis virescens larvae. Does not induce any toxic effects when injected intravenously into adult mice at a dose of 1.25 mg/kg body weight. This Segestria florentina (Tube-web spider) protein is Mu-segestritoxin-Sf1b.